A 233-amino-acid polypeptide reads, in one-letter code: Glutathione S-transferase 2 (233 aa).

The 85-residue stretch at 17 to 101 (QKMIIYDTPA…YIDALDGTPT (85 aa)) folds into the GST N-terminal domain. Glutathione-binding positions include tyrosine 29, histidine 58, valine 72, 85–86 (EC), and histidine 133. Residues 106-233 (TPLEKGVIHM…KLLEIRSKSS (128 aa)) enclose the GST C-terminal domain.

Belongs to the GST superfamily. In terms of assembly, homodimer.

The catalysed reaction is RX + glutathione = an S-substituted glutathione + a halide anion + H(+). In Saccharomyces cerevisiae (strain ATCC 204508 / S288c) (Baker's yeast), this protein is Glutathione S-transferase 2 (GTT2).